Reading from the N-terminus, the 266-residue chain is MNKPIGVIDSGVGGLTVAKEIMRQLPNETIYYLGDIARCPYGPRPGDEVKQFTTQLANKLMQFDIKMLVIACNTATAVALEHLQQMLPIPVIGVIEPGSRTAIMTTKNQNVLILGTEGTIKSEAYRHHIKHINPNVHVLWCGLPGFVPLVEQMRYDDPTITSIVIHQTLKQWRNTDADTIILGCTHYPLLYKPINDYFGGEKKVISSGLETAREVSALLTFSNEHASYTQHPEHRFFATGDTVHIKNIILQWLKLDVEVERISVDE.

Substrate-binding positions include 9 to 10 (DS) and 41 to 42 (YG). Cys-72 functions as the Proton donor/acceptor in the catalytic mechanism. A substrate-binding site is contributed by 73-74 (NT). The active-site Proton donor/acceptor is Cys-184. 185-186 (TH) is a binding site for substrate.

It belongs to the aspartate/glutamate racemases family.

It catalyses the reaction L-glutamate = D-glutamate. Its pathway is cell wall biogenesis; peptidoglycan biosynthesis. Its function is as follows. Provides the (R)-glutamate required for cell wall biosynthesis. The polypeptide is Glutamate racemase (Staphylococcus haemolyticus).